Here is a 219-residue protein sequence, read N- to C-terminus: Small ribosomal subunit protein uS5 (219 aa).

Positions 1 to 21 are enriched in polar residues; it reads MTDQNQKANQGNGLQTTNLQA. The segment at 1–61 is disordered; it reads MTDQNQKANQ…NQNRRFQKPA (61 aa). The segment covering 35–47 has biased composition (basic and acidic residues); that stretch reads GIKKAVSKKEGGG. In terms of domain architecture, S5 DRBM spans 66-129; sequence FEERIVKLKR…KAAHNSLHTI (64 aa).

It belongs to the universal ribosomal protein uS5 family. As to quaternary structure, part of the 30S ribosomal subunit. Contacts proteins S4 and S8.

With S4 and S12 plays an important role in translational accuracy. In terms of biological role, located at the back of the 30S subunit body where it stabilizes the conformation of the head with respect to the body. The polypeptide is Small ribosomal subunit protein uS5 (Mycoplasma pneumoniae (strain ATCC 29342 / M129 / Subtype 1) (Mycoplasmoides pneumoniae)).